The primary structure comprises 363 residues: NAD(P)H-quinone oxidoreductase subunit 1, chloroplastic (363 aa).

The next 6 membrane-spanning stretches (helical) occupy residues 30–50, 98–118, 127–147, 248–268, 300–320, and 336–356; these read LVPI…IVWL, FSIG…VIPF, LSIG…GLLM, YSGI…LVSS, VFGT…FLFI, and LLNL…LLTT.

The protein belongs to the complex I subunit 1 family. As to quaternary structure, NDH is composed of at least 16 different subunits, 5 of which are encoded in the nucleus.

Its subcellular location is the plastid. The protein localises to the chloroplast thylakoid membrane. The enzyme catalyses a plastoquinone + NADH + (n+1) H(+)(in) = a plastoquinol + NAD(+) + n H(+)(out). The catalysed reaction is a plastoquinone + NADPH + (n+1) H(+)(in) = a plastoquinol + NADP(+) + n H(+)(out). Its function is as follows. NDH shuttles electrons from NAD(P)H:plastoquinone, via FMN and iron-sulfur (Fe-S) centers, to quinones in the photosynthetic chain and possibly in a chloroplast respiratory chain. The immediate electron acceptor for the enzyme in this species is believed to be plastoquinone. Couples the redox reaction to proton translocation, and thus conserves the redox energy in a proton gradient. The chain is NAD(P)H-quinone oxidoreductase subunit 1, chloroplastic from Drimys granadensis.